Reading from the N-terminus, the 529-residue chain is Peptide chain release factor 3 (529 aa).

The tr-type G domain occupies 11–280; that stretch reads AKRRTFAIIS…GLVEWAPAPM (270 aa). Residues 20-27, 88-92, and 142-145 contribute to the GTP site; these read SHPDAGKT, DTPGH, and NKLD.

Belongs to the TRAFAC class translation factor GTPase superfamily. Classic translation factor GTPase family. PrfC subfamily.

Its subcellular location is the cytoplasm. Its function is as follows. Increases the formation of ribosomal termination complexes and stimulates activities of RF-1 and RF-2. It binds guanine nucleotides and has strong preference for UGA stop codons. It may interact directly with the ribosome. The stimulation of RF-1 and RF-2 is significantly reduced by GTP and GDP, but not by GMP. In Klebsiella pneumoniae (strain 342), this protein is Peptide chain release factor 3.